We begin with the raw amino-acid sequence, 60 residues long: Movement protein TGBp3 (60 aa).

Over 1–6 (MHYIDW) the chain is Lumenal. Residues 7–23 (VILLTFAAALIVCLTPK) traverse the membrane as a helical segment. The Cytoplasmic segment spans residues 24-60 (PEPCIITVSGASATVSNCPNPELLTDLVKALKPAKPV).

This sequence belongs to the Tymovirales TGBp3 protein family.

It is found in the host endoplasmic reticulum membrane. Plays a role in viral cell-to-cell propagation, by facilitating genome transport to neighboring plant cells through plasmosdesmata. May induce the formation of granular vesicles derived from the Endoplasmic reticulum, which align on actin filaments. The protein is Movement protein TGBp3 of Citrus (ICRSV).